The primary structure comprises 350 residues: HTH-type DNA-binding transcriptional activator EutR (350 aa).

Positions 243-344 (SRAREYVLEN…AEKPSLTLHQ (102 aa)) constitute an HTH araC/xylS-type domain. 2 DNA-binding regions (H-T-H motif) span residues 260–281 (LDLC…HAIL) and 311–334 (VKDA…QQLF).

The protein operates within amine and polyamine degradation; ethanolamine degradation. Functionally, activates the transcription of the eut operon, allowing utilization of ethanolamine (EA). Positively regulates its own transcription. Probably binds EA and vitamin B12 as effectors. Competes with ethanolamine ammonia-lysase (EAL, the first enzyme in the EA degradation pathway) for adenosylcobalamin. Ethanolamine-associated signaling mediated via this protein, but not EA degradation, impacts S.typhimurium survival within macrophages. Binds the promoter of ssrB and eutS in vitro; in mouse infection models binding to ssrB probably induces all 4 operons of pathogenicity island SPI-2. Expression of the eut operon allows this bacteria to use ethanolamine (EA) as a carbon, nitrogen and energy source. It relies on cobalamin (vitamin B12) both as a cofactor for the ethanolamine ammonia-lyase (EAL) activity and to induce the operon. EA enhances bacterial survival in macrophages in a concentration-dependent manner, suggesting it is an important nutrient in infection. In Salmonella typhimurium (strain LT2 / SGSC1412 / ATCC 700720), this protein is HTH-type DNA-binding transcriptional activator EutR.